We begin with the raw amino-acid sequence, 306 residues long: Ribosomal protein L11 methyltransferase (306 aa).

Residues Thr139, Gly173, Asp195, and Asn242 each contribute to the S-adenosyl-L-methionine site.

It belongs to the methyltransferase superfamily. PrmA family.

The protein resides in the cytoplasm. The enzyme catalyses L-lysyl-[protein] + 3 S-adenosyl-L-methionine = N(6),N(6),N(6)-trimethyl-L-lysyl-[protein] + 3 S-adenosyl-L-homocysteine + 3 H(+). Its function is as follows. Methylates ribosomal protein L11. This is Ribosomal protein L11 methyltransferase from Nostoc sp. (strain PCC 7120 / SAG 25.82 / UTEX 2576).